A 210-amino-acid polypeptide reads, in one-letter code: Probable GTP-binding protein EngB (210 aa).

The EngB-type G domain occupies 25-199; sequence TGIEVAFAGR…RQKLDTWFSE (175 aa). GTP-binding positions include 33–40, 60–64, 78–81, 145–148, and 178–180; these read GRSNAGKS, GRTQL, DLPG, TKTD, and FSS. Mg(2+) is bound by residues S40 and T62.

It belongs to the TRAFAC class TrmE-Era-EngA-EngB-Septin-like GTPase superfamily. EngB GTPase family. Requires Mg(2+) as cofactor.

Functionally, necessary for normal cell division and for the maintenance of normal septation. The polypeptide is Probable GTP-binding protein EngB (Escherichia coli O6:K15:H31 (strain 536 / UPEC)).